Reading from the N-terminus, the 1166-residue chain is Tectonin beta-propeller repeat-containing protein 1 (1166 aa).

TECPR repeat units follow at residues 209–240 (LSVW…SLVE), 254–285 (DLIW…SMVE), 301–332 (SVVW…IEMV), and 344–376 (DQVW…KAIV). Phosphoserine occurs at positions 386, 388, 391, 413, and 418. Residues 404–496 (RGSGTESAPS…PAELPWTNID (93 aa)) form a disordered region. Polar residues predominate over residues 407–416 (GTESAPSDTD). Residues 451–462 (TSGNTDHSTENA) are compositionally biased toward polar residues. The segment covering 466–481 (EGKEKAPETSRSDECR) has biased composition (basic and acidic residues). The 107-residue stretch at 616 to 722 (KTGALQWWCD…WLALLSLSCC (107 aa)) folds into the PH domain. The stretch at 734–761 (QAIWSVTCKGDIFVSEPSPDLEARERLL) is one TECPR 5 repeat. Position 943 is a phosphoserine (Ser943). TECPR repeat units follow at residues 958-989 (VALW…LHVG), 1003-1034 (YQVW…YHIP), 1049-1080 (TSVY…EHVS), and 1092-1132 (DQVW…DYGI).

This sequence belongs to the TECPR1 family. In terms of assembly, interacts with ATG5; the interaction is direct. Interacts with WIPI2. Interacts with the ATG5-ATG12 conjugate, the interaction is however mutually exclusive with ATG16, since it does not interact with ATG12-ATG5-ATG16 complex.

Its subcellular location is the cytoplasmic vesicle. It is found in the autophagosome membrane. The protein localises to the lysosome membrane. Its function is as follows. Tethering factor involved in autophagy. Involved in autophagosome maturation by promoting the autophagosome fusion with lysosomes: acts by associating with both the ATG5-ATG12 conjugate and phosphatidylinositol-3-phosphate (PtdIns(3)P) present at the surface of autophagosomes. Also involved in selective autophagy against bacterial pathogens, by being required for phagophore/preautophagosomal structure biogenesis and maturation. The polypeptide is Tectonin beta-propeller repeat-containing protein 1 (Tecpr1) (Mus musculus (Mouse)).